We begin with the raw amino-acid sequence, 510 residues long: Glucose-6-phosphate 1-dehydrogenase (510 aa).

Residues 29-36, Arg63, and Lys164 contribute to the NADP(+) site; that span reads GASGDLAK. D-glucose 6-phosphate is bound by residues Lys164, 194–198, Glu232, and Asp251; that span reads HYLGK. His256 functions as the Proton acceptor in the catalytic mechanism. Position 347 (Lys347) interacts with NADP(+). A D-glucose 6-phosphate-binding site is contributed by Lys350. Positions 356, 360, and 382 each coordinate NADP(+). Residue Gln384 participates in D-glucose 6-phosphate binding. Residues 390-392, 410-412, and Arg477 contribute to the NADP(+) site; these read YIK and DLT.

It belongs to the glucose-6-phosphate dehydrogenase family.

It carries out the reaction D-glucose 6-phosphate + NADP(+) = 6-phospho-D-glucono-1,5-lactone + NADPH + H(+). Its pathway is carbohydrate degradation; pentose phosphate pathway; D-ribulose 5-phosphate from D-glucose 6-phosphate (oxidative stage): step 1/3. Functionally, catalyzes the rate-limiting step of the oxidative pentose-phosphate pathway, which represents a route for the dissimilation of carbohydrates besides glycolysis. The main function of this enzyme is to provide reducing power (NADPH) and pentose phosphates for fatty acid and nucleic acid synthesis. In Aspergillus niger, this protein is Glucose-6-phosphate 1-dehydrogenase (gsdA).